A 179-amino-acid chain; its full sequence is Macro domain-containing protein XCC3184 (179 aa).

Residues 1-175 enclose the Macro domain; sequence MRIEVWQGDI…AYHQALATQE (175 aa).

Belongs to the MacroD-type family.

The protein is Macro domain-containing protein XCC3184 of Xanthomonas campestris pv. campestris (strain ATCC 33913 / DSM 3586 / NCPPB 528 / LMG 568 / P 25).